The primary structure comprises 220 residues: Ribose-5-phosphate isomerase A (220 aa).

Residues 28-31, 81-84, and 94-97 each bind substrate; these read TGST, DGAD, and KGGG. Residue E103 is the Proton acceptor of the active site. A substrate-binding site is contributed by K121.

It belongs to the ribose 5-phosphate isomerase family. As to quaternary structure, homodimer.

The enzyme catalyses aldehydo-D-ribose 5-phosphate = D-ribulose 5-phosphate. The protein operates within carbohydrate degradation; pentose phosphate pathway; D-ribose 5-phosphate from D-ribulose 5-phosphate (non-oxidative stage): step 1/1. Functionally, catalyzes the reversible conversion of ribose-5-phosphate to ribulose 5-phosphate. This is Ribose-5-phosphate isomerase A from Shewanella baltica (strain OS185).